The primary structure comprises 281 residues: 40S small subunit processome assembly factor 1 (281 aa).

Positions 29–141 are disordered; that stretch reads LGETEGETEQ…DEDEPAKNKT (113 aa). 2 positions are modified to phosphoserine: serine 67 and serine 75. Residue lysine 172 is modified to N6-acetyllysine. Residues 221–254 form a disordered region; the sequence is ETDIFKKKKKKGRGQEDRRSKKSAPSILSSGQVG. Position 267 is a phosphoserine (serine 267).

Part of the small subunit (SSU) processome, composed of more than 70 proteins and the RNA chaperone small nucleolar RNA (snoRNA) U3.

It localises to the chromosome. Its subcellular location is the nucleus. The protein localises to the nucleolus. Functionally, part of the small subunit (SSU) processome, first precursor of the small eukaryotic ribosomal subunit. During the assembly of the SSU processome in the nucleolus, many ribosome biogenesis factors, an RNA chaperone and ribosomal proteins associate with the nascent pre-rRNA and work in concert to generate RNA folding, modifications, rearrangements and cleavage as well as targeted degradation of pre-ribosomal RNA by the RNA exosome. Prevents helicase DHX37 to be recruited before post-A1 state. This Mus musculus (Mouse) protein is 40S small subunit processome assembly factor 1.